A 133-amino-acid polypeptide reads, in one-letter code: Salivary cystatin-L (133 aa).

The signal sequence occupies residues M1–A19. The Cystatin domain occupies A30 to E117. Disulfide bonds link C89-C100 and C111-C130.

The protein belongs to the cystatin family. In terms of assembly, monomer. Can form homodimers in vitro, but probably not in vivo. Homodimers are predicted to be inactive; dimerization disrupts the interaction with target proteases.

Its subcellular location is the secreted. Inhibitor of cysteine proteinases. Inhibits host immune responses via its inhibition of host cathepsins. Contributes to the suppression of the host's immune response to tick salivary proteins and is important for successful feeding on hosts. Inhibits differentiation of host dendritic cells. Inhibits proliferation of host T-cells in response to antigen stimulus. Down-regulates TLR2-mediated host responses to infection by B.burgdorferi and the production of the chemokine CCL3 by host dendritic cells. Down-regulates host responses to infection by B.burgdorferi and the production of IFNB1 by host dendritic cells. Down-regulates IL1B production by host mast cells, and this then leads to impaired activation of IL1R1, resulting in decreased IL9 production. Inhibits host inflammatory reactions and recruitment of host neutrophils. Inhibits papain and cathepsin L (CTSL) (in vitro). Inhibits cathepsin S (CTSS) (in vitro). Inhibits CTSV and CTSC, but to a lesser degree (in vitro). The chain is Salivary cystatin-L from Ixodes scapularis (Black-legged tick).